A 213-amino-acid chain; its full sequence is MPAHQLDDHNQETRSDDENIVWHPHAITRQDREQQHGHQGVVLWFTGLSGSGKSTLAGALEQALFARGVSTYLLDGDNVRHGLCRDLGFSDADRRENIRRVGEVAKLMVDAGLVVLTAFISPHRAERKMVQDMLASGQFIEVFVDTPLAICEARDPKGLYKKARAGELKNFTGIDSVYESPASPDIHLQGEQLVTNLIEQLLDVLRGRAIIKS.

Residues 1-17 (MPAHQLDDHNQETRSDD) show a composition bias toward basic and acidic residues. Residues 1–20 (MPAHQLDDHNQETRSDDENI) are disordered. 47–54 (GLSGSGKS) contacts ATP. Ser121 functions as the Phosphoserine intermediate in the catalytic mechanism.

The protein belongs to the APS kinase family.

The catalysed reaction is adenosine 5'-phosphosulfate + ATP = 3'-phosphoadenylyl sulfate + ADP + H(+). It functions in the pathway sulfur metabolism; hydrogen sulfide biosynthesis; sulfite from sulfate: step 2/3. Functionally, catalyzes the synthesis of activated sulfate. This Yersinia pestis protein is Adenylyl-sulfate kinase.